Consider the following 109-residue polypeptide: METTAIIRGVHISAQKTRLVADLIRGKSVAQALNILTFSPKKAAGILKKAVESAIANAEHNDGADIDELKITTIFVDKAQSMKRFSARAKGRGNRIEKQTCHITVKVGA.

The protein belongs to the universal ribosomal protein uL22 family. In terms of assembly, part of the 50S ribosomal subunit.

Functionally, this protein binds specifically to 23S rRNA; its binding is stimulated by other ribosomal proteins, e.g. L4, L17, and L20. It is important during the early stages of 50S assembly. It makes multiple contacts with different domains of the 23S rRNA in the assembled 50S subunit and ribosome. Its function is as follows. The globular domain of the protein is located near the polypeptide exit tunnel on the outside of the subunit, while an extended beta-hairpin is found that lines the wall of the exit tunnel in the center of the 70S ribosome. This chain is Large ribosomal subunit protein uL22, found in Bordetella petrii (strain ATCC BAA-461 / DSM 12804 / CCUG 43448).